The primary structure comprises 143 residues: Large ribosomal subunit protein uL11 (143 aa).

It belongs to the universal ribosomal protein uL11 family. In terms of assembly, part of the ribosomal stalk of the 50S ribosomal subunit. Interacts with L10 and the large rRNA to form the base of the stalk. L10 forms an elongated spine to which L12 dimers bind in a sequential fashion forming a multimeric L10(L12)X complex. In terms of processing, one or more lysine residues are methylated.

Its function is as follows. Forms part of the ribosomal stalk which helps the ribosome interact with GTP-bound translation factors. The chain is Large ribosomal subunit protein uL11 from Nitrosomonas europaea (strain ATCC 19718 / CIP 103999 / KCTC 2705 / NBRC 14298).